A 376-amino-acid polypeptide reads, in one-letter code: Queuine tRNA-ribosyltransferase (376 aa).

The active-site Proton acceptor is the Asp93. Substrate contacts are provided by residues 93 to 97, Asp147, Gln190, and Gly217; that span reads DSGGF. An RNA binding region spans residues 248-254; the sequence is GVGKPDD. Asp267 serves as the catalytic Nucleophile. 4 residues coordinate Zn(2+): Cys305, Cys307, Cys310, and His336.

It belongs to the queuine tRNA-ribosyltransferase family. As to quaternary structure, homodimer. Within each dimer, one monomer is responsible for RNA recognition and catalysis, while the other monomer binds to the replacement base PreQ1. Zn(2+) serves as cofactor.

The enzyme catalyses 7-aminomethyl-7-carbaguanine + guanosine(34) in tRNA = 7-aminomethyl-7-carbaguanosine(34) in tRNA + guanine. It participates in tRNA modification; tRNA-queuosine biosynthesis. Its function is as follows. Catalyzes the base-exchange of a guanine (G) residue with the queuine precursor 7-aminomethyl-7-deazaguanine (PreQ1) at position 34 (anticodon wobble position) in tRNAs with GU(N) anticodons (tRNA-Asp, -Asn, -His and -Tyr). Catalysis occurs through a double-displacement mechanism. The nucleophile active site attacks the C1' of nucleotide 34 to detach the guanine base from the RNA, forming a covalent enzyme-RNA intermediate. The proton acceptor active site deprotonates the incoming PreQ1, allowing a nucleophilic attack on the C1' of the ribose to form the product. After dissociation, two additional enzymatic reactions on the tRNA convert PreQ1 to queuine (Q), resulting in the hypermodified nucleoside queuosine (7-(((4,5-cis-dihydroxy-2-cyclopenten-1-yl)amino)methyl)-7-deazaguanosine). The chain is Queuine tRNA-ribosyltransferase from Ruegeria pomeroyi (strain ATCC 700808 / DSM 15171 / DSS-3) (Silicibacter pomeroyi).